The primary structure comprises 118 residues: MAAAAAAGSGTPREEEAPGGEAAASQAQAPTSAPGGVRLSRLPLARVKALVKADPDVTLAGQEAIFILARAAELFVETIAKDAYCCAQQGKRKTLQRRDLDNAIEAVDEFAFLEGTLD.

2 stretches are compositionally biased toward low complexity: residues 1-11 and 19-35; these read MAAAAAAGSGT and GGEA…SAPG. Residues 1 to 37 are disordered; it reads MAAAAAAGSGTPREEEAPGGEAAASQAQAPTSAPGGV. Alanine 2 carries the post-translational modification N-acetylalanine. The residue at position 11 (threonine 11) is a Phosphothreonine. The residue at position 25 (serine 25) is a Phosphoserine.

Component of the DNA polymerase epsilon complex consisting of four subunits: the catalytic subunit POLE and the accessory subunits POLE2, POLE3 and POLE4. Interaction with POLE3 is a prerequisite for further binding with POLE and POLE2.

It is found in the nucleus. Its function is as follows. Accessory component of the DNA polymerase epsilon complex. Participates in DNA repair and in chromosomal DNA replication. The protein is DNA polymerase epsilon subunit 4 (Pole4) of Mus musculus (Mouse).